The sequence spans 595 residues: MEFCDESYDLVNIDEFDALWVASRHGVAFGVPPCLLISDDDAIARSSIELKSGPSSSNLSPSTLSTEKTSSDSSGVICDPQLHETWREGLGKFPAKEHARKVARELGADHGIIFLLGQDEKYYEDSDMGPTFRQRRYFYYITGADFPGCAVTYDILRDKLVLWIPRIEPRTVLWFGKVPTPEECKAASDVDSVYYIDFLHEKQCPVFKRGQTIHVLHPDQIPPELDHLGKFIRIDAVRLKPAMDAARVIKTDYEIALIRRANAVSSAAHKAVLRNIKRFTNEREIDALFRGYCIAHGAPIQSYPVIAASGINASTLHYDDNNQSLKNRQLLILDAGAEVHCYASDITRTIPLPGSFTPLAREIYRLVERMQDECIAQIKPGVRFSALHAHACAVAVTGLLKLGILRGEEEEILARGTVAAFFPHGLGHHVGLEVHDVSGTERLLLNGGPGSGPGSGGGYGCGASTWRGYRLRRRVMTKRESLTPWEVAALWEGAKPEKEKQQERWLLNNVPLDEVEAALTLASSSGARGQKLAPGMVVTVEPGIYFLPRVLEKYWNVGGVRIEDDILVTKKGYENLTTAPKGDEMMKCMGESGLL.

Residues 51-76 are disordered; it reads KSGPSSSNLSPSTLSTEKTSSDSSGV. Low complexity predominate over residues 52 to 66; sequence SGPSSSNLSPSTLST. Positions 334, 345, 541, and 563 each coordinate Mn(2+).

This sequence belongs to the peptidase M24B family. Requires Mn(2+) as cofactor.

It catalyses the reaction Release of any N-terminal amino acid, including proline, that is linked to proline, even from a dipeptide or tripeptide.. Its function is as follows. Catalyzes the removal of a penultimate prolyl residue from the N-termini of peptides. The polypeptide is Probable Xaa-Pro aminopeptidase CHGG_02942 (Chaetomium globosum (strain ATCC 6205 / CBS 148.51 / DSM 1962 / NBRC 6347 / NRRL 1970) (Soil fungus)).